The following is a 198-amino-acid chain: Holliday junction branch migration complex subunit RuvA (198 aa).

Positions 1–61 (MILYRIGEII…EYQYATYAFK (61 aa)) are domain I. The interval 62 to 139 (DFKERLLFVD…KMISPKDAAK (78 aa)) is domain II. Residues 140–144 (INETT) are flexible linker. The tract at residues 144–198 (TNTLSEVKETLKMVGFKTKQIDGALSKISSTDDVEKMIEEAIKLMSTQNYESATA) is domain III.

This sequence belongs to the RuvA family. As to quaternary structure, homotetramer. Forms an RuvA(8)-RuvB(12)-Holliday junction (HJ) complex. HJ DNA is sandwiched between 2 RuvA tetramers; dsDNA enters through RuvA and exits via RuvB. An RuvB hexamer assembles on each DNA strand where it exits the tetramer. Each RuvB hexamer is contacted by two RuvA subunits (via domain III) on 2 adjacent RuvB subunits; this complex drives branch migration. In the full resolvosome a probable DNA-RuvA(4)-RuvB(12)-RuvC(2) complex forms which resolves the HJ.

It is found in the cytoplasm. In terms of biological role, the RuvA-RuvB-RuvC complex processes Holliday junction (HJ) DNA during genetic recombination and DNA repair, while the RuvA-RuvB complex plays an important role in the rescue of blocked DNA replication forks via replication fork reversal (RFR). RuvA specifically binds to HJ cruciform DNA, conferring on it an open structure. The RuvB hexamer acts as an ATP-dependent pump, pulling dsDNA into and through the RuvAB complex. HJ branch migration allows RuvC to scan DNA until it finds its consensus sequence, where it cleaves and resolves the cruciform DNA. In Mycoplasmopsis agalactiae (strain NCTC 10123 / CIP 59.7 / PG2) (Mycoplasma agalactiae), this protein is Holliday junction branch migration complex subunit RuvA.